The following is a 418-amino-acid chain: Voltage-gated ClC-type chloride channel ClcB (418 aa).

Topologically, residues 1 to 4 are cytoplasmic; it reads MFRR. A helical transmembrane segment spans residues 5-25; sequence LLIATVVGILAAFAVAGFRHA. Residues 26–53 are Periplasmic-facing; that stretch reads MLLLEWLFLNNDSGSLVNAATNLSPWRR. The chain crosses the membrane as a helical span at residues 54–74; that stretch reads LLTPALGGLAAGLLLMGWQKF. At 75-145 the chain is on the cytoplasmic side; it reads TQQRPHAPTD…QRFTPRQEWK (71 aa). A helical membrane pass occupies residues 146–166; sequence LWIACGAAAGMAAAYRAPLAG. Over 167 to 177 the chain is Periplasmic; that stretch reads SLFIAEVLFGT. The chain crosses the membrane as a helical span at residues 178-200; sequence MMLASLGPVIISAVVALLVSNLI. The Cytoplasmic portion of the chain corresponds to 201–221; sequence NHSDALLYSVQLSVTVQARDY. Residues 222–242 traverse the membrane as a helical segment; that stretch reads ALIISTGVLAGLCGPLLLTLM. Residues 243 to 257 are Periplasmic-facing; the sequence is NACHRGFVSLKLAPP. A helical membrane pass occupies residues 258 to 278; it reads WQLALGGLIVGLLSLFTPAVW. Residues 279–290 lie on the Cytoplasmic side of the membrane; sequence GNGYSTVQSFLT. A helical membrane pass occupies residues 291-311; it reads APPLLMIIAGIFLCKLCAVLA. At 312–315 the chain is on the periplasmic side; the sequence is SSGS. A helical transmembrane segment spans residues 316 to 336; the sequence is GAPGGVFTPTLFIGLAIGMLY. Residues 337-351 are Cytoplasmic-facing; it reads GRSLGLWFPDGEEIT. A helical transmembrane segment spans residues 352 to 372; it reads LLLGLTGMATLLAATTHAPIM. Residues 373–379 lie on the Periplasmic side of the membrane; the sequence is STLMICE. The helical transmembrane segment at 380–400 threads the bilayer; the sequence is MTGEYQLLPGLLIACVIASVI. Over 401–418 the chain is Cytoplasmic; sequence SRTLHRDSIYRQHTAQHS.

Belongs to the chloride channel (TC 2.A.49) family. ClcB subfamily.

The protein localises to the cell inner membrane. Functionally, probably acts as an electrical shunt for an outwardly-directed proton pump that is linked to amino acid decarboxylation, as part of the extreme acid resistance (XAR) response. This chain is Voltage-gated ClC-type chloride channel ClcB (clcB), found in Escherichia coli O157:H7.